The sequence spans 111 residues: uncharacterized protein (111 aa).

Residues 66 to 94 (PVPTATPSLPRSGFTSSAKKIKESRKQKS) are disordered. Over residues 70 to 83 (ATPSLPRSGFTSSA) the composition is skewed to polar residues.

Its subcellular location is the plastid. It is found in the chloroplast. This is an uncharacterized protein from Chlamydomonas reinhardtii (Chlamydomonas smithii).